We begin with the raw amino-acid sequence, 307 residues long: Ribonuclease Z (307 aa).

Positions 63, 65, 67, 68, 140, 211, and 269 each coordinate Zn(2+). Residue D67 is the Proton acceptor of the active site.

Belongs to the RNase Z family. Homodimer. Requires Zn(2+) as cofactor.

It catalyses the reaction Endonucleolytic cleavage of RNA, removing extra 3' nucleotides from tRNA precursor, generating 3' termini of tRNAs. A 3'-hydroxy group is left at the tRNA terminus and a 5'-phosphoryl group is left at the trailer molecule.. Functionally, zinc phosphodiesterase, which displays some tRNA 3'-processing endonuclease activity. Probably involved in tRNA maturation, by removing a 3'-trailer from precursor tRNA. This Geobacillus kaustophilus (strain HTA426) protein is Ribonuclease Z.